The primary structure comprises 74 residues: Coleoptericin (74 aa).

The disordered stretch occupies residues 1–74 (SLQGGAPNFP…TWHVGGTYRR (74 aa)).

This sequence belongs to the coleoptericin family.

The protein localises to the secreted. Its function is as follows. Responsible for the anti Gram-negative activity of immune hemolymph of Z.atratus. The polypeptide is Coleoptericin (Zophobas atratus (Giant mealworm beetle)).